A 163-amino-acid chain; its full sequence is C-type lectin lectoxin-Lio2 (163 aa).

An N-terminal signal peptide occupies residues 1–21 (MERFIFAALLVVALSLSGTGA). Cystine bridges form between cysteine 25–cysteine 36, cysteine 53–cysteine 152, and cysteine 127–cysteine 144. The C-type lectin domain occupies 32-153 (SDGYCYKVFK…CRSKRYFICK (122 aa)). The Mannose-binding signature appears at 117-119 (EPN). Residues glutamate 125 and aspartate 141 each coordinate Ca(2+).

The protein belongs to the true venom lectin family. In terms of tissue distribution, expressed by the venom gland.

The protein resides in the secreted. In terms of biological role, mannose-binding lectin which recognizes specific carbohydrate structures and agglutinates a variety of animal cells by binding to cell-surface glycoproteins and glycolipids. May be a calcium-dependent lectin. The chain is C-type lectin lectoxin-Lio2 from Erythrolamprus poecilogyrus (Water snake).